The following is a 219-amino-acid chain: Lipoprotein-releasing system ATP-binding protein LolD (219 aa).

Residues 5 to 219 form the ABC transporter domain; sequence LKAGDIFKTY…KVVMQDGVII (215 aa). 37-44 contacts ATP; it reads GASGAGKS.

It belongs to the ABC transporter superfamily. Lipoprotein translocase (TC 3.A.1.125) family. In terms of assembly, the complex is composed of two ATP-binding proteins (LolD) and two transmembrane proteins (LolC and LolE).

The protein resides in the cell inner membrane. Functionally, part of the ABC transporter complex LolCDE involved in the translocation of mature outer membrane-directed lipoproteins, from the inner membrane to the periplasmic chaperone, LolA. Responsible for the formation of the LolA-lipoprotein complex in an ATP-dependent manner. This Cytophaga hutchinsonii (strain ATCC 33406 / DSM 1761 / CIP 103989 / NBRC 15051 / NCIMB 9469 / D465) protein is Lipoprotein-releasing system ATP-binding protein LolD.